The primary structure comprises 140 residues: Nucleoside diphosphate kinase (140 aa).

ATP is bound by residues lysine 11, phenylalanine 59, arginine 87, threonine 93, arginine 104, and asparagine 114. Histidine 117 functions as the Pros-phosphohistidine intermediate in the catalytic mechanism.

It belongs to the NDK family. Homotetramer. Requires Mg(2+) as cofactor.

It localises to the cytoplasm. The enzyme catalyses a 2'-deoxyribonucleoside 5'-diphosphate + ATP = a 2'-deoxyribonucleoside 5'-triphosphate + ADP. It carries out the reaction a ribonucleoside 5'-diphosphate + ATP = a ribonucleoside 5'-triphosphate + ADP. Its function is as follows. Major role in the synthesis of nucleoside triphosphates other than ATP. The ATP gamma phosphate is transferred to the NDP beta phosphate via a ping-pong mechanism, using a phosphorylated active-site intermediate. The polypeptide is Nucleoside diphosphate kinase (Rhodopseudomonas palustris (strain BisA53)).